The primary structure comprises 301 residues: Acetylglutamate kinase (301 aa).

Substrate-binding positions include Gly72 to Gly73, Arg94, and Asn199.

It belongs to the acetylglutamate kinase family. ArgB subfamily.

The protein localises to the cytoplasm. It carries out the reaction N-acetyl-L-glutamate + ATP = N-acetyl-L-glutamyl 5-phosphate + ADP. The protein operates within amino-acid biosynthesis; L-arginine biosynthesis; N(2)-acetyl-L-ornithine from L-glutamate: step 2/4. In terms of biological role, catalyzes the ATP-dependent phosphorylation of N-acetyl-L-glutamate. In Bartonella henselae (strain ATCC 49882 / DSM 28221 / CCUG 30454 / Houston 1) (Rochalimaea henselae), this protein is Acetylglutamate kinase.